A 249-amino-acid polypeptide reads, in one-letter code: Vacuolar iron transporter homolog 3 (249 aa).

Residues 1–32 (MAMQMNSVVHVSTSPSPSPATSPPPEGKQEHG) form a disordered region. Residues 1-74 (MAMQMNSVVH…SGRAQWLRAA (74 aa)) are Cytoplasmic-facing. A compositionally biased stretch (pro residues) spans 16–26 (SPSPATSPPPE). The chain crosses the membrane as a helical span at residues 75-95 (VLGANDGLVSVASLMIGVGAV). Residues 96–102 (SESGRAM) lie on the Vacuolar side of the membrane. The helical transmembrane segment at 103–123 (LVSGVAGLVAGACSMAIGEFV) threads the bilayer. Topologically, residues 124-166 (SVYAQYDIEVAAARRRRRQRRRRCDGDGEEEGSGRLPSPFKAA) are cytoplasmic. The helical transmembrane segment at 167–187 (AASALAFTVGALLPLLAGGFV) threads the bilayer. The Vacuolar portion of the chain corresponds to 188–193 (RPWAPR). Residues 194–214 (VAAVCAATSAALAGFGALGAA) traverse the membrane as a helical segment. Over 215–226 (LGGASPARSAAR) the chain is Cytoplasmic. Residues 227 to 247 (VLLGGWAAMAACYGVLRLFAN) form a helical membrane-spanning segment. The Vacuolar segment spans residues 248-249 (LY).

The protein belongs to the CCC1 family.

It is found in the vacuole membrane. It carries out the reaction Fe(2+)(in) = Fe(2+)(out). Functionally, probable vacuolar iron transporter that may be involved in the regulation of iron distribution throughout the plant. The sequence is that of Vacuolar iron transporter homolog 3 from Oryza sativa subsp. japonica (Rice).